The primary structure comprises 286 residues: MVAKILDGKQIAKEYRQRLKNQVNDLKEYGFTPKLSVILVGNDGASQSYVKSKKKAAEKIGMISEIIHLDESTSEEVVLSELNRLNNDDTVSGILVQVPLPKQVSEQKVLEAINPEKDVDGFHPINIGKLYIDEQTFVPCTPLGIMEILKHADINLEGKNAVVIGRSHIVGQPVSKLLLQANATVTILHSRTKNMNAHLKQADVIVSAVGQPGLVTKENVKKGAVIIDVGNTPDENGKLKGDVAYDEIKEIASAITPVPGGVGPLTITMVLNNTLLAEKLRRGLTK.

Residues 165-167 and S190 contribute to the NADP(+) site; that span reads GRS.

Belongs to the tetrahydrofolate dehydrogenase/cyclohydrolase family. Homodimer.

The enzyme catalyses (6R)-5,10-methylene-5,6,7,8-tetrahydrofolate + NADP(+) = (6R)-5,10-methenyltetrahydrofolate + NADPH. It carries out the reaction (6R)-5,10-methenyltetrahydrofolate + H2O = (6R)-10-formyltetrahydrofolate + H(+). Its pathway is one-carbon metabolism; tetrahydrofolate interconversion. Functionally, catalyzes the oxidation of 5,10-methylenetetrahydrofolate to 5,10-methenyltetrahydrofolate and then the hydrolysis of 5,10-methenyltetrahydrofolate to 10-formyltetrahydrofolate. The sequence is that of Bifunctional protein FolD from Staphylococcus epidermidis (strain ATCC 35984 / DSM 28319 / BCRC 17069 / CCUG 31568 / BM 3577 / RP62A).